We begin with the raw amino-acid sequence, 922 residues long: MAGAAPVYCVCRQPYDVSRFMIECDICKDWFHSSCVKVEEHQAADIDLYHCPNCEVLHGPSQLKKRRNWHRHDYTEPDDGTKPVQAGTRTFIQQLQARSFPSADDLLLKMNGSQLTQRYLEKQGFNLPIMVPRLDDLGLRLPPPTFSVMDVERYVGGEKIIDVIDVARQADSKMKLKNFVKYFMNPDRPKVLNVISLEFSDTKMADLVKVPDISKKLSWVENYWPDDSFFTKPFVQKYCLMGVQDSYTDFHIDFGGTSVWYHVLWGEKVFYLIKPSDENLALYESWSSSVTQSEEFFGDKVDKCYKCVVKQGHTLFVPTGWIHAVLTSQDCMAFGGNFLHNLNIGMQLRCYEMEKRLKTPDLFKFPFFEAICWFVAKNLLETLKELKEDGFHPPNYLKHGVKALISALKSWMKKESVAEHAFEIPDNIRPGHLIKELSKVIRSVEEEGNRPVKSQGIHGHCPVSRSSHEKSSHHSGRKARRLRDHSTKTPTNLDILEHHTREVLKRLEMSPWEEDAGTYKLNMRFNKPLLPSSTEPDQKVRDNGIRLLLSNGRIIRDERQPFTDRSLYTADSEDEDDRARSRKAKDIKQEKPCSTSGMEDKAETQKPLNMFFESVKSELRNGSSEYSDISDSEGSEDNCTNQKHFSEESESSGDDDDEEEEEEEERQEPIRNLKEEHSGRRLPCDPNFPWPDHDSPQKRECPTSTSMEQEAVQGMLSMASLHYPSALPTPAKSTDCNIRGGYPQLHIRVSQGNGKEHLDSHSHKAANSDHHVKDEGEFSALDWIRQPDASCRLSPQDSCQVPQSLRREFAHEEYEKAPEDKHYLEIEHWDSAEYQPEKYDPESSMSSGECHLSDGSLSPTRIYGDTAAAVPLHPTKRPASNPPPISNQATKGKRPKKGMATAKQRLGKILKLNRNGHARFFV.

The PHD-type zinc finger occupies 6–57 (PVYCVCRQPYDVSRFMIECDICKDWFHSSCVKVEEHQAADIDLYHCPNCEVL). In terms of domain architecture, JmjC spans 199–355 (FSDTKMADLV…MQLRCYEMEK (157 aa)). Thr248 contributes to the substrate binding site. Positions 251 and 253 each coordinate Fe cation. Lys268 lines the substrate pocket. His323 serves as a coordination point for Fe cation. 5 disordered regions span residues 445–490 (EEEG…TKTP), 565–607 (RSLY…TQKP), 622–711 (GSSE…EQEA), 754–773 (GKEHLDSHSHKAANSDHHVK), and 872–902 (LHPTKRPASNPPPISNQATKGKRPKKGMATA). The segment covering 473–483 (HHSGRKARRLR) has biased composition (basic residues). The span at 648 to 666 (ESESSGDDDDEEEEEEEER) shows a compositional bias: acidic residues. Basic and acidic residues-rich tracts occupy residues 667-683 (QEPIRNLKEEHSGRRLP) and 691-701 (PDHDSPQKREC).

This sequence belongs to the JHDM1 histone demethylase family. JHDM1D subfamily. It depends on Fe(2+) as a cofactor.

Its subcellular location is the nucleus. Its function is as follows. Histone demethylase required for brain development. Specifically demethylates dimethylated 'Lys-9' and 'Lys-27' (H3K9me2 and H3K27me2, respectively) of histone H3 and monomethylated histone H4 'Lys-20' residue (H4K20Me1), thereby playing a central role in histone code. In Xenopus tropicalis (Western clawed frog), this protein is Lysine-specific demethylase 7A (kdm7a).